A 442-amino-acid polypeptide reads, in one-letter code: Mitochondrial distribution and morphology protein 12 (442 aa).

The 442-residue stretch at Met-1–Val-442 folds into the SMP-LTD domain. Disordered stretches follow at residues Asn-67–Tyr-125, Leu-202–Arg-277, and Glu-364–Asn-387. Acidic residues predominate over residues Phe-69–Ser-80. The span at Pro-90–Pro-100 shows a compositional bias: polar residues. A compositionally biased stretch (low complexity) spans Asn-101 to Asn-112. Residues Arg-213–Asp-222 are compositionally biased toward basic and acidic residues. Low complexity predominate over residues Ser-227 to Thr-245.

Belongs to the MDM12 family. In terms of assembly, component of the ER-mitochondria encounter structure (ERMES) or MDM complex, composed of MMM1, MDM10, MDM12 and MDM34. An MMM1 homodimer associates with one molecule of MDM12 on each side in a pairwise head-to-tail manner, and the SMP-LTD domains of MMM1 and MDM12 generate a continuous hydrophobic tunnel for phospholipid trafficking.

It localises to the mitochondrion outer membrane. The protein localises to the endoplasmic reticulum membrane. Functionally, component of the ERMES/MDM complex, which serves as a molecular tether to connect the endoplasmic reticulum (ER) and mitochondria. Components of this complex are involved in the control of mitochondrial shape and protein biogenesis, and function in nonvesicular lipid trafficking between the ER and mitochondria. MDM12 is required for the interaction of the ER-resident membrane protein MMM1 and the outer mitochondrial membrane-resident beta-barrel protein MDM10. The MDM12-MMM1 subcomplex functions in the major beta-barrel assembly pathway that is responsible for biogenesis of all mitochondrial outer membrane beta-barrel proteins, and acts in a late step after the SAM complex. The MDM10-MDM12-MMM1 subcomplex further acts in the TOM40-specific pathway after the action of the MDM12-MMM1 complex. Essential for establishing and maintaining the structure of mitochondria and maintenance of mtDNA nucleoids. This is Mitochondrial distribution and morphology protein 12 from Arthroderma otae (strain ATCC MYA-4605 / CBS 113480) (Microsporum canis).